A 501-amino-acid chain; its full sequence is Lysine--tRNA ligase (501 aa).

Mg(2+)-binding residues include Glu-402 and Glu-409.

It belongs to the class-II aminoacyl-tRNA synthetase family. Homodimer. Mg(2+) serves as cofactor.

It localises to the cytoplasm. It catalyses the reaction tRNA(Lys) + L-lysine + ATP = L-lysyl-tRNA(Lys) + AMP + diphosphate. This Helicobacter pylori (strain P12) protein is Lysine--tRNA ligase.